The following is a 549-amino-acid chain: Pleckstrin homology domain-containing family A member 8 (549 aa).

One can recognise a PH domain in the interval methionine 1 to alanine 93. Disordered stretches follow at residues asparagine 180 to serine 245 and glutamine 257 to glutamine 312. Basic and acidic residues predominate over residues lysine 203–leucine 219. Over residues glutamate 276 to glutamate 288 the composition is skewed to acidic residues. Positions glutamate 299–glutamine 309 are enriched in polar residues.

It localises to the cytoplasm. Its subcellular location is the golgi apparatus. The protein resides in the trans-Golgi network membrane. It is found in the membrane. In terms of biological role, cargo transport protein that is required for apical transport from the trans-Golgi network (TGN) to the plasma membrane. In Danio rerio (Zebrafish), this protein is Pleckstrin homology domain-containing family A member 8 (plekha8).